Here is a 466-residue protein sequence, read N- to C-terminus: tRNA(Ile)-lysidine synthase (466 aa).

42 to 47 (SGGVDS) lines the ATP pocket.

Belongs to the tRNA(Ile)-lysidine synthase family.

The protein localises to the cytoplasm. The enzyme catalyses cytidine(34) in tRNA(Ile2) + L-lysine + ATP = lysidine(34) in tRNA(Ile2) + AMP + diphosphate + H(+). Ligates lysine onto the cytidine present at position 34 of the AUA codon-specific tRNA(Ile) that contains the anticodon CAU, in an ATP-dependent manner. Cytidine is converted to lysidine, thus changing the amino acid specificity of the tRNA from methionine to isoleucine. This chain is tRNA(Ile)-lysidine synthase, found in Anaplasma marginale (strain St. Maries).